A 157-amino-acid polypeptide reads, in one-letter code: Small ribosomal subunit protein uS7 (157 aa).

It belongs to the universal ribosomal protein uS7 family. As to quaternary structure, part of the 30S ribosomal subunit. Contacts proteins S9 and S11.

In terms of biological role, one of the primary rRNA binding proteins, it binds directly to 16S rRNA where it nucleates assembly of the head domain of the 30S subunit. Is located at the subunit interface close to the decoding center, probably blocks exit of the E-site tRNA. This chain is Small ribosomal subunit protein uS7, found in Rhodopirellula baltica (strain DSM 10527 / NCIMB 13988 / SH1).